The following is a 183-amino-acid chain: GTP cyclohydrolase 1 (183 aa).

Cysteine 71, histidine 74, and cysteine 142 together coordinate Zn(2+).

It belongs to the GTP cyclohydrolase I family. Homomer.

The enzyme catalyses GTP + H2O = 7,8-dihydroneopterin 3'-triphosphate + formate + H(+). Its pathway is cofactor biosynthesis; 7,8-dihydroneopterin triphosphate biosynthesis; 7,8-dihydroneopterin triphosphate from GTP: step 1/1. This chain is GTP cyclohydrolase 1, found in Leptospira biflexa serovar Patoc (strain Patoc 1 / Ames).